A 391-amino-acid chain; its full sequence is 1-acyl-sn-glycerol-3-phosphate acyltransferase 2 (391 aa).

A helical transmembrane segment spans residues 3–23; sequence MAAAAVIVPLGILFFISGLVV. Residues 92-97 carry the HXXXXD motif motif; the sequence is HRSDID. The next 2 membrane-spanning stretches (helical) occupy residues 306–326 and 334–354; these read LAVVVSWACLLTLGAMKFLHW and KGIALSALGLGIITLCMQILI. A disordered region spans residues 358–391; sequence QSERSTPAKVAPAKPKDKHQSGSSSQTEVEEKQK.

Belongs to the 1-acyl-sn-glycerol-3-phosphate acyltransferase family.

The protein resides in the endoplasmic reticulum membrane. The catalysed reaction is a 1-acyl-sn-glycero-3-phosphate + an acyl-CoA = a 1,2-diacyl-sn-glycero-3-phosphate + CoA. It participates in phospholipid metabolism; CDP-diacylglycerol biosynthesis; CDP-diacylglycerol from sn-glycerol 3-phosphate: step 2/3. Its function is as follows. Converts lysophosphatidic acid (LPA) into phosphatidic acid by incorporating acyl moiety at the 2 position. This Brassica oleracea (Wild cabbage) protein is 1-acyl-sn-glycerol-3-phosphate acyltransferase 2 (LPAT2).